The chain runs to 338 residues: Phenylalanine--tRNA ligase alpha subunit (338 aa).

A Mg(2+)-binding site is contributed by Glu-252.

Belongs to the class-II aminoacyl-tRNA synthetase family. Phe-tRNA synthetase alpha subunit type 1 subfamily. Tetramer of two alpha and two beta subunits. The cofactor is Mg(2+).

The protein resides in the cytoplasm. It carries out the reaction tRNA(Phe) + L-phenylalanine + ATP = L-phenylalanyl-tRNA(Phe) + AMP + diphosphate + H(+). This is Phenylalanine--tRNA ligase alpha subunit from Mycoplasmoides gallisepticum (strain R(low / passage 15 / clone 2)) (Mycoplasma gallisepticum).